We begin with the raw amino-acid sequence, 236 residues long: Homeobox protein notochord (236 aa).

A DNA-binding region (homeobox) is located at residues 138 to 197 (MKRIRTVFTPEQLEKLEKEFLKQQYMVGTERVDLASTLNLTETQVKVWFQNRRIKWRKQS). Positions 209-236 (GVIPADSSDHTDDSRETEEDEDDLDVEL) are disordered. The span at 223–236 (RETEEDEDDLDVEL) shows a compositional bias: acidic residues.

In terms of tissue distribution, expressed throughout the embryo during pre-gastrula stages. Localized to the dorsal lip of the blastopore (Spemann organizer) during early gastrulation, after which expression continues in tissues derived from the organizer. Expressed in the notochord during mid-gastrulation. During neurulation, expressed in the notochord, archenteron roof and the prospective floor plate. Also expressed in the region that will become the epiphysis, the pineal body precursor. By the early tailbud stages, expression is limited to posterior notochord and floor plate before becoming restricted to the tip of the tail in the tadpole.

Its subcellular location is the nucleus. In terms of biological role, transcriptional repressor. Plays a fundamental role in notochord formation, acting within the mesodermal region. This is Homeobox protein notochord (noto) from Xenopus laevis (African clawed frog).